Consider the following 74-residue polypeptide: ERTHTGEKPFKCPECQKRFTRDHHLKTHMRLHTGEKPYHCSHCDRHFVQVANLRRHLRVHTGERPYTCEICKAK.

4 consecutive C2H2-type zinc fingers follow at residues 1 to 4 (ERTH), 10 to 32 (FKCPECQKRFTRDHHLKTHMRLH), 38 to 60 (YHCSHCDRHFVQVANLRRHLRVH), and 66 to 74 (YTCEICKAK).

It belongs to the krueppel C2H2-type zinc-finger protein family.

It is found in the nucleus. Functionally, krueppel is a gap class segmentation protein. The chain is Protein krueppel (Kr) from Bradysia coprophila (Dark-winged fungus gnat).